The chain runs to 249 residues: uncharacterized protein (249 aa).

Residues 3–23 (WYWIGLLIVVVLFLLSAVRIV) traverse the membrane as a helical segment.

Belongs to the band 7/mec-2 family.

Its subcellular location is the membrane. This is an uncharacterized protein from Archaeoglobus fulgidus (strain ATCC 49558 / DSM 4304 / JCM 9628 / NBRC 100126 / VC-16).